The chain runs to 338 residues: Putative peptide import ATP-binding protein BruAb2_0796 (338 aa).

In terms of domain architecture, ABC transporter spans leucine 7–leucine 263. Glycine 43 to serine 50 contacts ATP.

The protein belongs to the ABC transporter superfamily. The complex is composed of two ATP-binding proteins (BruAb2_0796 and BruAb2_0797), two transmembrane proteins (BruAb2_0794) and a solute-binding protein (BruAb2_0792).

It localises to the cell inner membrane. Functionally, probably part of an ABC transporter complex that could be involved in peptide import. Probably responsible for energy coupling to the transport system. This Brucella abortus biovar 1 (strain 9-941) protein is Putative peptide import ATP-binding protein BruAb2_0796.